Consider the following 374-residue polypeptide: Patatin-2-Kuras 4 (374 aa).

The signal sequence occupies residues methionine 1–alanine 11. Residues leucine 20–leucine 217 form the PNPLA domain. The GXGXXG motif lies at glycine 24–glycine 29. Residues glycine 63–glycine 67 carry the GXSXG motif. Serine 65 functions as the Nucleophile in the catalytic mechanism. Residue asparagine 103 is glycosylated (N-linked (GlcNAc...) asparagine). The Proton acceptor role is filled by aspartate 203. Positions aspartate 203–glycine 205 match the DGA/G motif. A coiled-coil region spans residues glutamate 309–alanine 372.

The protein belongs to the patatin family.

The protein localises to the vacuole. Probable lipolytic acyl hydrolase (LAH), an activity which is thought to be involved in the response of tubers to pathogens. This is Patatin-2-Kuras 4 (pat2-k4) from Solanum tuberosum (Potato).